We begin with the raw amino-acid sequence, 169 residues long: Transcription antitermination protein NusB (169 aa).

It belongs to the NusB family.

Its function is as follows. Involved in transcription antitermination. Required for transcription of ribosomal RNA (rRNA) genes. Binds specifically to the boxA antiterminator sequence of the ribosomal RNA (rrn) operons. This chain is Transcription antitermination protein NusB, found in Deinococcus geothermalis (strain DSM 11300 / CIP 105573 / AG-3a).